We begin with the raw amino-acid sequence, 190 residues long: Bifunctional D-Ala-D-Ala dipeptidase and D-Ala-D-Ala carboxypeptidase VanXYC (190 aa).

Residue Glu-66 participates in Mg(2+) binding. Residues Gln-67, Ala-88, Ser-93, His-95, and Asp-102 each coordinate a dipeptide. His-95 and Asp-102 together coordinate Cu(2+). Residues His-95 and Asp-102 each contribute to the Zn(2+) site. Catalysis depends on Glu-153, which acts as the catalytic acid/base residue. A dipeptide contacts are provided by Trp-155 and His-156. His-156 contacts Cu(2+). His-156 is a binding site for Zn(2+).

It belongs to the peptidase M15D family. Homodimer.

The protein resides in the cytoplasm. It catalyses the reaction D-alanyl-D-alanine + H2O = 2 D-alanine. It carries out the reaction UDP-N-acetyl-alpha-D-muramoyl-L-alanyl-gamma-D-glutamyl-L-lysyl-D-alanyl-D-alanine + H2O = UDP-N-acetyl-alpha-D-muramoyl-L-alanyl-gamma-D-glutamyl-L-lysyl-D-alanine + D-alanine. In terms of biological role, bifunctional enzyme, exhibiting dipeptidase and carboxypeptidase activities. Catalyzes hydrolysis of the D-alanyl-D-alanine dipeptide. Cleaves the C-terminal D-alanine residue of UDP-muramyl-pentapeptide[Ala] (UDP-MurNAc-L-Ala-D-Glu-L-Lys-D-Ala-D-Ala). Shows no activity against the pentapeptide with a C-terminal D-serine residue. Together with VanC/VanC1 and VanT, required for vancomycin resistance in E.gallinarum strain BM4174. The polypeptide is Bifunctional D-Ala-D-Ala dipeptidase and D-Ala-D-Ala carboxypeptidase VanXYC (Enterococcus gallinarum).